The primary structure comprises 428 residues: Adenylosuccinate synthetase (428 aa).

GTP contacts are provided by residues 12-18 (GDEGKGK) and 40-42 (GHT). D13 acts as the Proton acceptor in catalysis. The Mg(2+) site is built by D13 and G40. IMP contacts are provided by residues 13-16 (DEGK), 38-41 (NAGH), T130, R144, Q225, T240, and R304. Residue H41 is the Proton donor of the active site. 300 to 306 (VTTGRAR) contributes to the substrate binding site. GTP contacts are provided by residues R306, 332–334 (KID), and 414–416 (SVG).

It belongs to the adenylosuccinate synthetase family. As to quaternary structure, homodimer. It depends on Mg(2+) as a cofactor.

Its subcellular location is the cytoplasm. It carries out the reaction IMP + L-aspartate + GTP = N(6)-(1,2-dicarboxyethyl)-AMP + GDP + phosphate + 2 H(+). Its pathway is purine metabolism; AMP biosynthesis via de novo pathway; AMP from IMP: step 1/2. Its function is as follows. Plays an important role in the de novo pathway of purine nucleotide biosynthesis. Catalyzes the first committed step in the biosynthesis of AMP from IMP. The polypeptide is Adenylosuccinate synthetase (Clostridium botulinum (strain Okra / Type B1)).